The sequence spans 213 residues: Charged multivesicular body protein 2b (213 aa).

A2 is modified (N-acetylalanine). A coiled-coil region spans residues 25–55 (QRAIIRDRAALEKQEKQLELEIKKMAKIGNK). The segment covering 179 to 194 (AKAPSAARSLPSASTS) has biased composition (low complexity). Residues 179 to 199 (AKAPSAARSLPSASTSKATIS) are disordered. The residue at position 199 (S199) is a Phosphoserine. The MIT-interacting motif signature appears at 201 to 211 (EEIERQLKALG).

Belongs to the SNF7 family. Probable core component of the endosomal sorting required for transport complex III (ESCRT-III). ESCRT-III components are thought to multimerize to form a flat lattice on the perimeter membrane of the endosome. Several assembly forms of ESCRT-III may exist that interact and act sequentially. Interacts with CHMP2A. Interacts with VPS4A. Interacts with VPS4B; the interaction is direct. In brain, it is expressed in all neuronal populations with a relatively enhanced expression in the hippocampus, frontal and temporal lobes and in both granule and Purkinje cells of the cerebellum. Not expressed in astrocytes or oligodendrocytes.

The protein resides in the cytoplasm. It is found in the cytosol. The protein localises to the late endosome membrane. Probable core component of the endosomal sorting required for transport complex III (ESCRT-III) which is involved in multivesicular bodies (MVBs) formation and sorting of endosomal cargo proteins into MVBs. MVBs contain intraluminal vesicles (ILVs) that are generated by invagination and scission from the limiting membrane of the endosome and mostly are delivered to lysosomes enabling degradation of membrane proteins, such as stimulated growth factor receptors, lysosomal enzymes and lipids. The MVB pathway appears to require the sequential function of ESCRT-O, -I,-II and -III complexes. ESCRT-III proteins mostly dissociate from the invaginating membrane before the ILV is released. The ESCRT machinery also functions in topologically equivalent membrane fission events, such as the terminal stages of cytokinesis. ESCRT-III proteins are believed to mediate the necessary vesicle extrusion and/or membrane fission activities, possibly in conjunction with the AAA ATPase VPS4. The protein is Charged multivesicular body protein 2b (Chmp2b) of Mus musculus (Mouse).